Reading from the N-terminus, the 212-residue chain is MIKLSYLTSYITCPRLCYFRVHVGEKRFTELTAVREIYLSLKQGFDLDWAKKRAKALHGAFDEEAFRSAANKFIFPQIDCKSVEVDATIKSKSLGLLVSVDEIVECDGELLPLFLGLNPPENGVWFKDMVKAGAAALAGNYSKALIYYGYTGDLRPVEVTFSLKKKVIKLIERVKLIQRGFLPERKESRYCNYCSFSEDCKSRAETFASKFL.

This is an uncharacterized protein from Archaeoglobus fulgidus (strain ATCC 49558 / DSM 4304 / JCM 9628 / NBRC 100126 / VC-16).